Here is a 446-residue protein sequence, read N- to C-terminus: Tubulin beta-6 chain (446 aa).

Positions 11, 69, 138, 142, 143, 144, 204, and 226 each coordinate GTP. Glu-69 contacts Mg(2+). Positions 426-446 (QDATADEEEYEDEEEVQADDM) are disordered. Positions 429 to 446 (TADEEEYEDEEEVQADDM) are enriched in acidic residues.

It belongs to the tubulin family. As to quaternary structure, dimer of alpha and beta chains. A typical microtubule is a hollow water-filled tube with an outer diameter of 25 nm and an inner diameter of 15 nM. Alpha-beta heterodimers associate head-to-tail to form protofilaments running lengthwise along the microtubule wall with the beta-tubulin subunit facing the microtubule plus end conferring a structural polarity. Microtubules usually have 13 protofilaments but different protofilament numbers can be found in some organisms and specialized cells. Mg(2+) is required as a cofactor.

The protein localises to the cytoplasm. The protein resides in the cytoskeleton. Functionally, tubulin is the major constituent of microtubules, a cylinder consisting of laterally associated linear protofilaments composed of alpha- and beta-tubulin heterodimers. Microtubules grow by the addition of GTP-tubulin dimers to the microtubule end, where a stabilizing cap forms. Below the cap, tubulin dimers are in GDP-bound state, owing to GTPase activity of alpha-tubulin. This is Tubulin beta-6 chain (TUBB6) from Zea mays (Maize).